The sequence spans 1581 residues: MKAQGETEESEKLSKMSSLLERLHAKFNQNRPWSETIKLVRQVMEKRVVMSSGGHQHLVSCLETLQKALKVTSLPAMTDRLESIARQNGLGSHLSASGTECYITSDMFYVEVQLDPAGQLCDVKVAHHGENPVSCPELVQQLREKNFDEFSKHLKGLVNLYNLPGDNKLKTKMYLALQSLEQDLSKMAIMYWKATNAGPLDKILHGSVGYLTPRSGGHLMNLKYYVSPSDLLDDKTASPIILHENNVSRSLGMNASVTIEGTSAVYKLPIAPLIMGSHPVDNKWTPSFSSITSANSVDLPACFFLKFPQPIPVSRAFVQKLQNCTGIPLFETQPTYAPLYELITQFELSKDPDPIPLNHNMRFYAALPGQQHCYFLNKDAPLPDGRSLQGTLVSKITFQHPGRVPLILNLIRHQVAYNTLIGSCVKRTILKEDSPGLLQFEVCPLSESRFSVSFQHPVNDSLVCVVMDVQDSTHVSCKLYKGLSDALICTDDFIAKVVQRCMSIPVTMRAIRRKAETIQADTPALSLIAETVEDMVKKNLPPASSPGYGMTTGNNPMSGTTTPTNTFPGGPITTLFNMSMSIKDRHESVGHGEDFSKVSQNPILTSLLQITGNGGSTIGSSPTPPHHTPPPVSSMAGNTKNHPMLMNLLKDNPAQDFSTLYGSSPLERQNSSSGSPRMEICSGSNKTKKKKSSRLPPEKPKHQTEDDFQRELFSMDVDSQNPIFDVNMTADTLDTPHITPAPSQCSTPPTTYPQPVPHPQPSIQRMVRLSSSDSIGPDVTDILSDIAEEASKLPSTSDDCPAIGTPLRDSSSSGHSQSTLFDSDVFQTNNNENPYTDPADLIADAAGSPSSDSPTNHFFHDGVDFNPDLLNSQSQSGFGEEYFDESSQSGDNDDFKGFASQALNTLGVPMLGGDNGETKFKGNNQADTVDFSIISVAGKALAPADLMEHHSGSQGPLLTTGDLGKEKTQKRVKEGNGTSNSTLSGPGLDSKPGKRSRTPSNDGKSKDKPPKRKKADTEGKSPSHSSSNRPFTPPTSTGGSKSPGSAGRSQTPPGVATPPIPKITIQIPKGTVMVGKPSSHSQYTSSGSVSSSGSKSHHSHSSSSSSSASTSGKMKSSKSEGSSSSKLSSSMYSSQGSSGSSQSKNSSQSGGKPGSSPITKHGLSSGSSSTKMKPQGKPSSLMNPSLSKPNISPSHSRPPGGSDKLASPMKPVPGTPPSSKAKSPISSGSGGSHMSGTSSSSGMKSSSGLGSSGSLSQKTPPSSNSCTASSSSFSSSGSSMSSSQNQHGSSKGKSPSRNKKPSLTAVIDKLKHGVVTSGPGGEDPLDGQMGVSTNSSSHPMSSKHNMSGGEFQGKREKSDKDKSKVSTSGSSVDSSKKTSESKNVGSTGVAKIIISKHDGGSPSIKAKVTLQKPGESSGEGLRPQMASSKNYGSPLISGSTPKHERGSPSHSKSPAYTPQNLDSESESGSSIAEKSYQNSPSSDDGIRPLPEYSTEKHKKHKKEKKKVKDKDRDRDRDKDRDKKKSHSIKPESWSKSPISSDQSLSMTSNTILSADRPSRLSPDFMIGEEDDDLMDVALIGN.

Positions 1–670 (MKAQGETEES…YGSSPLERQN (670 aa)) are interaction with the Mediator complex and THRA. The tract at residues 16–590 (MSSLLERLHA…SIKDRHESVG (575 aa)) is interaction with ESR1. 2 interaction with the Mediator complex regions span residues 108 to 212 (FYVE…GYLT) and 215 to 390 (SGGH…SLQG). Residues 405–644 (PLILNLIRHQ…MAGNTKNHPM (240 aa)) are interaction with THRA. An interaction with VDR region spans residues 542-789 (PASSPGYGMT…TDILSDIAEE (248 aa)). Ser-588 carries the phosphoserine modification. An LXXLL motif 1 motif is present at residues 604 to 608 (LTSLL). Disordered regions lie at residues 609–705 (QITG…HQTE), 792–820 (KLPSTSDDCPAIGTPLRDSSSSGHSQSTL), 874–893 (SQSGFGEEYFDESSQSGDND), and 948–1566 (EHHS…DFMI). Residues 622-632 (PTPPHHTPPPV) are compositionally biased toward pro residues. An interaction with PPARGC1A and THRA region spans residues 622 to 701 (PTPPHHTPPP…SSRLPPEKPK (80 aa)). Residues 645–649 (LMNLL) carry the LXXLL motif 2 motif. A compositionally biased stretch (polar residues) spans 655 to 675 (QDFSTLYGSSPLERQNSSSGS). Residues 656 to 1066 (DFSTLYGSSP…TPPIPKITIQ (411 aa)) form an interaction with ESR1 region. Phosphoserine is present on Ser-664. The tract at residues 681–715 (CSGSNKTKKKKSSRLPPEKPKHQTEDDFQRELFSM) is interaction with GATA1. The span at 696 to 705 (PPEKPKHQTE) shows a compositional bias: basic and acidic residues. Phosphoserine is present on Ser-795. A Phosphothreonine modification is found at Thr-805. The span at 808–820 (RDSSSSGHSQSTL) shows a compositional bias: polar residues. Residues 875 to 902 (QSGFGEEYFDESSQSGDNDDFKGFASQA) carry the Integrase domain-binding motif (IBM) motif. A phosphoserine mark is found at Ser-887 and Ser-953. Residues 963 to 974 (LGKEKTQKRVKE) show a composition bias toward basic and acidic residues. Thr-1032 is subject to Phosphothreonine; by MAPK1 or MAPK3. Over residues 1034 to 1045 (PTSTGGSKSPGS) the composition is skewed to low complexity. A phosphothreonine mark is found at Thr-1051 and Thr-1057. 2 stretches are compositionally biased toward low complexity: residues 1078-1094 (SSHSQYTSSGSVSSSGS) and 1101-1156 (SSSS…PGSS). Ser-1156 is subject to Phosphoserine. The segment covering 1162-1195 (GLSSGSSSTKMKPQGKPSSLMNPSLSKPNISPSH) has biased composition (polar residues). N6-acetyllysine is present on Lys-1177. At Ser-1207 the chain carries Phosphoserine. The residue at position 1215 (Thr-1215) is a Phosphothreonine. Low complexity-rich tracts occupy residues 1218–1227 (SSKAKSPISS) and 1234–1293 (MSGT…SKGK). Residue Ser-1223 is modified to Phosphoserine. The interaction with TP53 stretch occupies residues 1249-1421 (LGSSGSLSQK…KPGESSGEGL (173 aa)). Ser-1302 carries the phosphoserine modification. A compositionally biased stretch (polar residues) spans 1330–1345 (GVSTNSSSHPMSSKHN). Phosphoserine is present on Ser-1347. Residues 1352 to 1364 (QGKREKSDKDKSK) show a composition bias toward basic and acidic residues. A phosphoserine mark is found at Ser-1403 and Ser-1433. Composition is skewed to polar residues over residues 1425–1440 (MASSKNYGSPLISGST) and 1448–1482 (PSHSKSPAYTPQNLDSESESGSSIAEKSYQNSPSS). The residue at position 1440 (Thr-1440) is a Phosphothreonine. Thr-1457 carries the phosphothreonine; by MAPK1 or MAPK3 modification. A phosphoserine mark is found at Ser-1463, Ser-1465, Ser-1479, Ser-1481, and Ser-1482. Residues 1496–1505 (KHKKHKKEKK) are compositionally biased toward basic residues. Positions 1506 to 1522 (KVKDKDRDRDRDKDRDK) are enriched in basic and acidic residues. Lys-1529 carries the post-translational modification N6-acetyllysine. The span at 1533-1552 (WSKSPISSDQSLSMTSNTIL) shows a compositional bias: polar residues.

The protein belongs to the Mediator complex subunit 1 family. As to quaternary structure, component of the Mediator complex, which is composed of MED1, MED4, MED6, MED7, MED8, MED9, MED10, MED11, MED12, MED13, MED13L, MED14, MED15, MED16, MED17, MED18, MED19, MED20, MED21, MED22, MED23, MED24, MED25, MED26, MED27, MED29, MED30, MED31, CCNC, CDK8 and CDC2L6/CDK11. The MED12, MED13, CCNC and CDK8 subunits form a distinct module termed the CDK8 module. Mediator containing the CDK8 module is less active than Mediator lacking this module in supporting transcriptional activation. Individual preparations of the Mediator complex lacking one or more distinct subunits have been variously termed ARC, CRSP, DRIP, PC2, SMCC and TRAP. This subunit specifically interacts with a number of nuclear receptors in a ligand-dependent fashion including AR, ESR1, ESR2, PPARA, PPARG, RORA, RXRA, RXRG, THRA, THRB and VDR. Interacts with CTNNB1, GABPA, GLI3, PPARGC1A and TP53. Interacts with YWHAH. Interacts with CLOCK; this interaction requires the presence of THRAP3. Interacts with GATA1 and CCAR1. Interacts with NR4A3. Interacts (via IBM motif) with PSIP1 (via IBD domain); phosphorylation increases its affinity for PSIP1. Interacts with USP22. In terms of processing, phosphorylated by MAPK1 or MAPK3 during G2/M phase which may enhance protein stability and promote entry into the nucleolus. Phosphorylation increases its interaction with PSIP1. In terms of tissue distribution, ubiquitously expressed.

It localises to the nucleus. Its function is as follows. Component of the Mediator complex, a coactivator involved in the regulated transcription of nearly all RNA polymerase II-dependent genes. Mediator functions as a bridge to convey information from gene-specific regulatory proteins to the basal RNA polymerase II transcription machinery. Mediator is recruited to promoters by direct interactions with regulatory proteins and serves as a scaffold for the assembly of a functional preinitiation complex with RNA polymerase II and the general transcription factors. Acts as a coactivator for GATA1-mediated transcriptional activation during erythroid differentiation of K562 erythroleukemia cells. This chain is Mediator of RNA polymerase II transcription subunit 1 (MED1), found in Homo sapiens (Human).